Here is a 145-residue protein sequence, read N- to C-terminus: Peptide methionine sulfoxide reductase MsrB (145 aa).

One can recognise a MsrB domain in the interval 4–127 (SDELKQRIGD…NSAALKFIPY (124 aa)). Catalysis depends on Cys-116, which acts as the Nucleophile.

Belongs to the MsrB Met sulfoxide reductase family.

The enzyme catalyses L-methionyl-[protein] + [thioredoxin]-disulfide + H2O = L-methionyl-(R)-S-oxide-[protein] + [thioredoxin]-dithiol. The protein is Peptide methionine sulfoxide reductase MsrB of Streptococcus pyogenes serotype M18 (strain MGAS8232).